The chain runs to 617 residues: DNA mismatch repair protein MutL (617 aa).

The protein belongs to the DNA mismatch repair MutL/HexB family.

Its function is as follows. This protein is involved in the repair of mismatches in DNA. It is required for dam-dependent methyl-directed DNA mismatch repair. May act as a 'molecular matchmaker', a protein that promotes the formation of a stable complex between two or more DNA-binding proteins in an ATP-dependent manner without itself being part of a final effector complex. The chain is DNA mismatch repair protein MutL from Bartonella tribocorum (strain CIP 105476 / IBS 506).